A 251-amino-acid chain; its full sequence is E3 ubiquitin-protein ligase Os06g0535400 (251 aa).

Helical transmembrane passes span 28–48 (VVAATFTGSFSLQIFLFYCFA), 102–122 (LANRCFAVVFMVFVPLVIVVF), and 127–147 (ADVVAYALCLANILVMVVWLS). The RING-type; atypical zinc finger occupies 185-227 (CCVCLAGMREAQALRDLPRCGHRFHAKCIGKWLTAHPTCPVCR).

The protein localises to the membrane. It carries out the reaction S-ubiquitinyl-[E2 ubiquitin-conjugating enzyme]-L-cysteine + [acceptor protein]-L-lysine = [E2 ubiquitin-conjugating enzyme]-L-cysteine + N(6)-ubiquitinyl-[acceptor protein]-L-lysine.. It participates in protein modification; protein ubiquitination. Functionally, possesses E3 ubiquitin-protein ligase in vitro. This chain is E3 ubiquitin-protein ligase Os06g0535400, found in Oryza sativa subsp. japonica (Rice).